We begin with the raw amino-acid sequence, 455 residues long: Argininosuccinate lyase (455 aa).

The protein belongs to the lyase 1 family. Argininosuccinate lyase subfamily.

It is found in the cytoplasm. The enzyme catalyses 2-(N(omega)-L-arginino)succinate = fumarate + L-arginine. It participates in amino-acid biosynthesis; L-arginine biosynthesis; L-arginine from L-ornithine and carbamoyl phosphate: step 3/3. The polypeptide is Argininosuccinate lyase (Shewanella sp. (strain MR-7)).